Reading from the N-terminus, the 479-residue chain is Ribosomal RNA small subunit methyltransferase F (479 aa).

Residues 125-131, Glu149, Asp176, and Asp194 contribute to the S-adenosyl-L-methionine site; that span reads AAAPGSK. Cys247 acts as the Nucleophile in catalysis.

Belongs to the class I-like SAM-binding methyltransferase superfamily. RsmB/NOP family.

Its subcellular location is the cytoplasm. It carries out the reaction cytidine(1407) in 16S rRNA + S-adenosyl-L-methionine = 5-methylcytidine(1407) in 16S rRNA + S-adenosyl-L-homocysteine + H(+). Functionally, specifically methylates the cytosine at position 1407 (m5C1407) of 16S rRNA. The polypeptide is Ribosomal RNA small subunit methyltransferase F (Salmonella schwarzengrund (strain CVM19633)).